A 752-amino-acid polypeptide reads, in one-letter code: Polyribonucleotide nucleotidyltransferase (752 aa).

Residues D529 and D535 each contribute to the Mg(2+) site. Residues 595–654 (PRVTTIKVPVDKIGEVIGPKGKVINAITEETGAQISIEDDGTVFVGATDGPSAQAAIDKI) enclose the KH domain. The 70-residue stretch at 666-735 (GERFLGTVVK…KRGKISLILV (70 aa)) folds into the S1 motif domain.

This sequence belongs to the polyribonucleotide nucleotidyltransferase family. The cofactor is Mg(2+).

The protein resides in the cytoplasm. It catalyses the reaction RNA(n+1) + phosphate = RNA(n) + a ribonucleoside 5'-diphosphate. In terms of biological role, involved in mRNA degradation. Catalyzes the phosphorolysis of single-stranded polyribonucleotides processively in the 3'- to 5'-direction. This is Polyribonucleotide nucleotidyltransferase from Mycobacterium tuberculosis (strain ATCC 25177 / H37Ra).